The chain runs to 670 residues: Small ribosomal subunit protein mS39 (670 aa).

A mitochondrion-targeting transit peptide spans 1 to 13 (MAAPCVRLGSVRC). PPR repeat units follow at residues 129–163 (VEGV…GTAP), 164–199 (SLET…EVQD), 209–239 (RPRQ…MPER), 240–274 (NAHS…RLTA), 275–314 (DVQT…NVRP), 315–351 (NLLT…NIEP), 352–392 (SLAT…FTLR), 396–430 (DVYF…DNRG), 438–472 (QSTY…LYYP), 473–507 (NSRG…GHSN), and 556–590 (SAGS…HRVP). Positions 187-213 (IQTSEQEQQEVQDQQETEDPKKRPRQY) are disordered. The span at 193-203 (EQQEVQDQQET) shows a compositional bias: acidic residues. The disordered stretch occupies residues 648-670 (EDLQKSHSSSSSSSSSSSDSDRE). Residues 653 to 670 (SHSSSSSSSSSSSDSDRE) are compositionally biased toward low complexity.

The protein belongs to the mitochondrion-specific ribosomal protein mS39 family.

The protein resides in the mitochondrion. Its function is as follows. Mitochondrial protein that may have a role in mitochondrial translation. This is Small ribosomal subunit protein mS39 (ptcd3) from Xenopus tropicalis (Western clawed frog).